Reading from the N-terminus, the 335-residue chain is MGLNINRPRRGSLAFSPRKRAKRPVPRIRSWPEEDTVRLQAFPVYKAGMSHAFIKEDNPKSPNAGQEVFTPITILEAPPINVCAIRVYGRNERNYLTTLTEVWADNLDKELERKIKLPKKEDRKTVEDLEALKDKIEDVRVLVHTNPKLTCLPKKKPEILEIRIGGKDIEERLNYAKEILGKQLNITDVFQEGELVDTIGVTKGKGFQGQVKRWGVKIQFGKHARKGVGRHVGSIGPWQPKMVMWSVPMPGQMGYHQRTEYNKRILKIGNNGDEITPKGGFLHYGVIRNNYVVLKGSVQGPAKRLIVLRRAIRPQEPLIKVPEITYISTTSKQGK.

It belongs to the universal ribosomal protein uL3 family. As to quaternary structure, part of the 50S ribosomal subunit. Forms a cluster with proteins L14 and L24e.

In terms of biological role, one of the primary rRNA binding proteins, it binds directly near the 3'-end of the 23S rRNA, where it nucleates assembly of the 50S subunit. The polypeptide is Large ribosomal subunit protein uL3 (Methanocaldococcus jannaschii (strain ATCC 43067 / DSM 2661 / JAL-1 / JCM 10045 / NBRC 100440) (Methanococcus jannaschii)).